We begin with the raw amino-acid sequence, 986 residues long: Rho guanine nucleotide exchange factor 2 (986 aa).

The Phorbol-ester/DAG-type zinc-finger motif lies at 39-86 (GHLFTTISVSGMTMCYACNKSITAKEALICPTCNVTIHNRCKDTLANC). Ser109, Ser122, Ser129, Ser133, and Ser137 each carry phosphoserine. Positions 131–161 (RQSLLGSRRGRSSLSLAKSVSTTNIAGHFND) are interaction with DYNLT1. Ser143 carries the post-translational modification Phosphoserine; by PAK4. Ser151, Ser163, Ser172, Ser174, and Ser177 each carry phosphoserine. In terms of domain architecture, DH spans 235-432 (KQQDVIYELI…KELLSNVDEG (198 aa)). N6-acetyllysine is present on Lys353. The 100-residue stretch at 472-571 (KLIHDGCLLW…WIRVIQQSVR (100 aa)) folds into the PH domain. Positions 587 to 611 (EAYLRRIKMELQQKDRALVELLREK) form a coiled coil. 2 positions are modified to phosphoserine: Ser645 and Ser648. The residue at position 679 (Thr679) is a Phosphothreonine; by MAPK1 or MAPK3. A disordered region spans residues 683-705 (PALPLEPDSGGNTSPGVTANGEA). 4 positions are modified to phosphoserine: Ser691, Ser696, Ser711, and Ser782. A coiled-coil region spans residues 798–867 (EKQATELALL…RQLAALGQTE (70 aa)). Residues 862 to 986 (ALGQTEPLPA…RDGEAVASES (125 aa)) form a disordered region. A Phosphoserine; by PAK1 and AURKA modification is found at Ser886. Position 894 is a phosphotyrosine (Tyr894). A Phosphoserine; by PAK4 modification is found at Ser896. Basic and acidic residues predominate over residues 920 to 939 (RNFEDRERQELGSPEERLQD). A phosphoserine mark is found at Ser932, Ser940, and Ser941. Residues 941-950 (SDPDTGSEEE) show a composition bias toward acidic residues. Phosphothreonine is present on Thr945. Ser947, Ser952, Ser953, Ser956, and Ser960 each carry phosphoserine.

As to quaternary structure, found in a complex composed at least of ARHGEF2, NOD2 and RIPK2. Interacts with RIPK2; the interaction mediates tyrosine phosphorylation of RIPK2 by Src kinase CSK. Interacts with RIPK1 and RIPK3. Interacts with YWHAZ/14-3-3 zeta; when phosphorylated at Ser-886. Interacts with the kinases PAK4, AURKA and MAPK1. Interacts with RHOA and RAC1. Interacts with NOD1. Interacts (via the N-terminal zinc finger) with CAPN6 (via domain II). Interacts with DYNLT1. Post-translationally, phosphorylation of Ser-886 by PAK1 induces binding to protein YWHAZ, promoting its relocation to microtubules and the inhibition of its activity. Phosphorylated by AURKA and CDK1 during mitosis, which negatively regulates its activity. Phosphorylation by MAPK1 or MAPK3 increases nucleotide exchange activity. Phosphorylation by PAK4 releases GEF-H1 from the microtubules. Phosphorylated on serine, threonine and tyrosine residues in a RIPK2-dependent manner.

It is found in the cytoplasm. The protein resides in the cytoskeleton. It localises to the cell junction. Its subcellular location is the tight junction. The protein localises to the golgi apparatus. It is found in the spindle. The protein resides in the cell projection. It localises to the ruffle membrane. Its subcellular location is the cytoplasmic vesicle. Its function is as follows. Activates Rho-GTPases by promoting the exchange of GDP for GTP. May be involved in epithelial barrier permeability, cell motility and polarization, dendritic spine morphology, antigen presentation, leukemic cell differentiation, cell cycle regulation, innate immune response, and cancer. Binds Rac-GTPases, but does not seem to promote nucleotide exchange activity toward Rac-GTPases, which was uniquely reported in PubMed:9857026. May stimulate instead the cortical activity of Rac. Inactive toward CDC42, TC10, or Ras-GTPases. Forms an intracellular sensing system along with NOD1 for the detection of microbial effectors during cell invasion by pathogens. Required for RHOA and RIP2 dependent NF-kappaB signaling pathways activation upon S.flexneri cell invasion. Involved not only in sensing peptidoglycan (PGN)-derived muropeptides through NOD1 that is independent of its GEF activity, but also in the activation of NF-kappaB by Shigella effector proteins (IpgB2 and OspB) which requires its GEF activity and the activation of RhoA. Involved in innate immune signaling transduction pathway promoting cytokine IL6/interleukin-6 and TNF-alpha secretion in macrophage upon stimulation by bacterial peptidoglycans; acts as a signaling intermediate between NOD2 receptor and RIPK2 kinase. Contributes to the tyrosine phosphorylation of RIPK2 through Src tyrosine kinase leading to NF-kappaB activation by NOD2. Overexpression activates Rho-, but not Rac-GTPases, and increases paracellular permeability. Involved in neuronal progenitor cell division and differentiation. Involved in the migration of precerebellar neurons. This Homo sapiens (Human) protein is Rho guanine nucleotide exchange factor 2 (ARHGEF2).